The sequence spans 208 residues: Small ribosomal subunit protein uS4 (208 aa).

Positions 98-161 constitute an S4 RNA-binding domain; it reads QRLDNVVYRM…KTNSQILRAI (64 aa).

This sequence belongs to the universal ribosomal protein uS4 family. As to quaternary structure, part of the 30S ribosomal subunit. Contacts protein S5. The interaction surface between S4 and S5 is involved in control of translational fidelity.

Its function is as follows. One of the primary rRNA binding proteins, it binds directly to 16S rRNA where it nucleates assembly of the body of the 30S subunit. In terms of biological role, with S5 and S12 plays an important role in translational accuracy. This is Small ribosomal subunit protein uS4 from Sulfurovum sp. (strain NBC37-1).